The sequence spans 137 residues: Small ribosomal subunit protein uS9 (137 aa).

The interval 105-137 (LKTEGYLKRDPRAVERKKYGLRKARKAPQYSKR) is disordered. Basic and acidic residues predominate over residues 109–122 (GYLKRDPRAVERKK). The span at 123 to 137 (YGLRKARKAPQYSKR) shows a compositional bias: basic residues.

Belongs to the universal ribosomal protein uS9 family.

The protein is Small ribosomal subunit protein uS9 of Synechococcus sp. (strain JA-3-3Ab) (Cyanobacteria bacterium Yellowstone A-Prime).